We begin with the raw amino-acid sequence, 353 residues long: Putative glycosyltransferase TagX (353 aa).

This sequence belongs to the glycosyltransferase 2 family.

This chain is Putative glycosyltransferase TagX (tagX), found in Staphylococcus aureus (strain MRSA252).